A 380-amino-acid polypeptide reads, in one-letter code: Chromo domain-containing protein 2 (380 aa).

Disordered regions lie at residues Ile14–Gly58 and Lys100–Asn156. The segment covering Asn33–Trp52 has biased composition (polar residues). The segment covering Glu108–Ser119 has biased composition (acidic residues). The segment covering Ser121–Lys140 has biased composition (low complexity). The Chromo domain maps to Phe176–Ser238. The segment at Ser250–Arg273 is disordered.

The protein localises to the nucleus. In terms of biological role, component of the kinetochore which plays a role in stabilizing microtubules and so allowing accurate chromosome segregation. The protein is Chromo domain-containing protein 2 (chp2) of Schizosaccharomyces pombe (strain 972 / ATCC 24843) (Fission yeast).